The sequence spans 163 residues: MIRIGQGFDVHRFAGKGEGFRLGGVAVPYHKRLEAHSDGDVLLHAITDGLLGACGMGDIGRHFPDDDPRWRDADSIGLLASTLRLAAEAGWVPVNVDGTVIAQAPKLAPYIGAMRQATADAMELSPGAVNVKATTSERLGFTGRGEGIAAMAVVLVESAPGRG.

Residues Asp-9 and His-11 each coordinate a divalent metal cation. Residues 9–11 (DVH) and 36–37 (HS) contribute to the 4-CDP-2-C-methyl-D-erythritol 2-phosphate site. Position 44 (His-44) interacts with a divalent metal cation. Residues 58 to 60 (DIG), 63 to 67 (FPDDD), 134 to 137 (TTSE), Phe-141, and Arg-144 contribute to the 4-CDP-2-C-methyl-D-erythritol 2-phosphate site.

The protein belongs to the IspF family. In terms of assembly, homotrimer. The cofactor is a divalent metal cation.

It catalyses the reaction 4-CDP-2-C-methyl-D-erythritol 2-phosphate = 2-C-methyl-D-erythritol 2,4-cyclic diphosphate + CMP. The protein operates within isoprenoid biosynthesis; isopentenyl diphosphate biosynthesis via DXP pathway; isopentenyl diphosphate from 1-deoxy-D-xylulose 5-phosphate: step 4/6. Involved in the biosynthesis of isopentenyl diphosphate (IPP) and dimethylallyl diphosphate (DMAPP), two major building blocks of isoprenoid compounds. Catalyzes the conversion of 4-diphosphocytidyl-2-C-methyl-D-erythritol 2-phosphate (CDP-ME2P) to 2-C-methyl-D-erythritol 2,4-cyclodiphosphate (ME-CPP) with a corresponding release of cytidine 5-monophosphate (CMP). The sequence is that of 2-C-methyl-D-erythritol 2,4-cyclodiphosphate synthase from Halorhodospira halophila (strain DSM 244 / SL1) (Ectothiorhodospira halophila (strain DSM 244 / SL1)).